The sequence spans 796 residues: DnaJ homolog subfamily C member 10 (796 aa).

The N-terminal stretch at 1 to 33 is a signal peptide; the sequence is MKHSLNTATSSSSVLKRTILYLVLISLAALVYC. A J domain is found at 36-100; the sequence is DYYDLLGVSK…DLRKKYDKYG (65 aa). The Thioredoxin 1 domain occupies 131–233; it reads EIITLDRGEF…ERLVNFAMPY (103 aa). A disulfide bridge links Cys-159 with Cys-162. 2 trxb regions span residues 236 to 351 and 349 to 464; these read STVT…LPDL and PDLE…PTNF. Thioredoxin domains lie at 455–554, 558–668, and 672–780; these read HVIT…IEDL, SVVT…ALMY, and ASFD…ITKR. Residues Cys-481 and Cys-484 are joined by a disulfide bond. Residue Asn-531 is glycosylated (N-linked (GlcNAc...) asparagine). Intrachain disulfides connect Cys-589–Cys-592 and Cys-701–Cys-704. Asn-753 is a glycosylation site (N-linked (GlcNAc...) asparagine). The Prevents secretion from ER signature appears at 793–796; sequence KDEL.

It is found in the endoplasmic reticulum lumen. Functionally, endoplasmic reticulum disulfide reductase involved both in the correct folding of proteins and degradation of misfolded proteins. Required for efficient folding of proteins in the endoplasmic reticulum by catalyzing the removal of non-native disulfide bonds formed during the folding of proteins. Also involved in endoplasmic reticulum-associated degradation (ERAD) by reducing incorrect disulfide bonds in misfolded glycoproteins. The chain is DnaJ homolog subfamily C member 10 (dnajc10) from Xenopus laevis (African clawed frog).